The chain runs to 70 residues: Large ribosomal subunit protein bL31 (70 aa).

The Zn(2+) site is built by C16, C18, C37, and C40.

Belongs to the bacterial ribosomal protein bL31 family. Type A subfamily. As to quaternary structure, part of the 50S ribosomal subunit. Zn(2+) is required as a cofactor.

Binds the 23S rRNA. This chain is Large ribosomal subunit protein bL31, found in Colwellia psychrerythraea (strain 34H / ATCC BAA-681) (Vibrio psychroerythus).